Consider the following 385-residue polypeptide: Cellulase CelDZ1 (385 aa).

The helical transmembrane segment at 6 to 26 (INKWYFFVGMLVIFAVIISLI) threads the bilayer. Substrate is bound by residues His-87, 91–92 (WF), Tyr-118, and His-153. The active-site Proton donor is Glu-192. Tyr-261 provides a ligand contact to substrate. Catalysis depends on Glu-294, which acts as the Nucleophile. Residues 300-301 (AS), Trp-328, and 333-335 (KNE) each bind substrate.

It belongs to the glycosyl hydrolase 5 (cellulase A) family. As to quaternary structure, monomer.

It localises to the cell membrane. The catalysed reaction is Endohydrolysis of (1-&gt;4)-beta-D-glucosidic linkages in cellulose, lichenin and cereal beta-D-glucans.. Its activity is regulated as follows. Activity is enhanced by 1mM Mn(2+), but is not affected by 1mM Ca(2+), Mg(2+), Zn(2+), K(+), Na(+) or Li(+). Activity is not inhibited by EDTA (in vitro). Its function is as follows. Thermostable endoglucanase that has high activity with soluble polymeric substrates containing beta-1,4-glycosidic bonds, such as carboxymethyl cellulose (CMC) and barley beta-D-glucan (in vitro). Has no activity with cellobiose and filter paper. Has no activity with substrates containing beta-1,3-linked glycans, such as laminarin. Likewise, lacks activity with xylan, galactomannan and pectin. This is Cellulase CelDZ1 from Thermoanaerobacterium sp.